The primary structure comprises 1162 residues: Carbamoyl phosphate synthase large chain (1162 aa).

Positions 1 to 456 are carboxyphosphate synthetic domain; sequence MPKRTDIKSI…SLQKALRGLE (456 aa). Residues Arg-129, Arg-222, Gly-228, Gly-229, Glu-261, Val-263, Glu-268, Gly-294, Val-295, His-296, Gln-338, and Glu-352 each contribute to the ATP site. The 196-residue stretch at 186 to 381 folds into the ATP-grasp 1 domain; sequence ETEWQLGEVE…IAKVAAKLAV (196 aa). Positions 338, 352, and 354 each coordinate Mg(2+). Residues Gln-338, Glu-352, and Asn-354 each coordinate Mn(2+). The tract at residues 457–613 is oligomerization domain; sequence TGLTGFDEIA…PFVGQPRSEA (157 aa). The carbamoyl phosphate synthetic domain stretch occupies residues 614–1025; that stretch reads EVSDRKKVVI…AFAKAQLGAG (412 aa). Positions 742-954 constitute an ATP-grasp 2 domain; that stretch reads QKLLIKLDLN…IAKVAARIMA (213 aa). ATP-binding residues include Arg-778, Thr-838, Leu-840, Glu-845, Gly-870, Ile-871, His-872, Ser-873, Gln-913, and Glu-925. Gln-913, Glu-925, and Asn-927 together coordinate Mg(2+). 3 residues coordinate Mn(2+): Gln-913, Glu-925, and Asn-927. An MGS-like domain is found at 1026–1162; it reads VELPREGTVF…VRPLQDYFRS (137 aa). The segment at 1026–1162 is allosteric domain; that stretch reads VELPREGTVF…VRPLQDYFRS (137 aa).

It belongs to the CarB family. As to quaternary structure, composed of two chains; the small (or glutamine) chain promotes the hydrolysis of glutamine to ammonia, which is used by the large (or ammonia) chain to synthesize carbamoyl phosphate. Tetramer of heterodimers (alpha,beta)4. Requires Mg(2+) as cofactor. Mn(2+) serves as cofactor.

It carries out the reaction hydrogencarbonate + L-glutamine + 2 ATP + H2O = carbamoyl phosphate + L-glutamate + 2 ADP + phosphate + 2 H(+). It catalyses the reaction hydrogencarbonate + NH4(+) + 2 ATP = carbamoyl phosphate + 2 ADP + phosphate + 2 H(+). Its pathway is amino-acid biosynthesis; L-arginine biosynthesis; carbamoyl phosphate from bicarbonate: step 1/1. It functions in the pathway pyrimidine metabolism; UMP biosynthesis via de novo pathway; (S)-dihydroorotate from bicarbonate: step 1/3. In terms of biological role, large subunit of the glutamine-dependent carbamoyl phosphate synthetase (CPSase). CPSase catalyzes the formation of carbamoyl phosphate from the ammonia moiety of glutamine, carbonate, and phosphate donated by ATP, constituting the first step of 2 biosynthetic pathways, one leading to arginine and/or urea and the other to pyrimidine nucleotides. The large subunit (synthetase) binds the substrates ammonia (free or transferred from glutamine from the small subunit), hydrogencarbonate and ATP and carries out an ATP-coupled ligase reaction, activating hydrogencarbonate by forming carboxy phosphate which reacts with ammonia to form carbamoyl phosphate. The chain is Carbamoyl phosphate synthase large chain from Brucella suis biovar 1 (strain 1330).